The sequence spans 539 residues: Glucose-6-phosphate isomerase (539 aa).

Glutamate 353 serves as the catalytic Proton donor. Residues histidine 384 and lysine 505 contribute to the active site.

Belongs to the GPI family.

It is found in the cytoplasm. The enzyme catalyses alpha-D-glucose 6-phosphate = beta-D-fructose 6-phosphate. It functions in the pathway carbohydrate biosynthesis; gluconeogenesis. The protein operates within carbohydrate degradation; glycolysis; D-glyceraldehyde 3-phosphate and glycerone phosphate from D-glucose: step 2/4. Its function is as follows. Catalyzes the reversible isomerization of glucose-6-phosphate to fructose-6-phosphate. This Ralstonia pickettii (strain 12J) protein is Glucose-6-phosphate isomerase.